A 124-amino-acid polypeptide reads, in one-letter code: Fluoride-specific ion channel FluC (124 aa).

The next 4 helical transmembrane spans lie at 1-21 (MLNT…RYGV), 36-56 (TMII…WFVV), 70-90 (TGIL…FLLI), and 100-120 (LYVI…FAII). Na(+) contacts are provided by G74 and T77.

It belongs to the fluoride channel Fluc/FEX (TC 1.A.43) family.

It is found in the cell inner membrane. The catalysed reaction is fluoride(in) = fluoride(out). Na(+) is not transported, but it plays an essential structural role and its presence is essential for fluoride channel function. Fluoride-specific ion channel. Important for reducing fluoride concentration in the cell, thus reducing its toxicity. This Methylobacterium sp. (strain 4-46) protein is Fluoride-specific ion channel FluC.